The chain runs to 99 residues: Spore coat protein F-like protein YraD (99 aa).

Belongs to the CotF family.

The protein resides in the spore coat. The polypeptide is Spore coat protein F-like protein YraD (yraD) (Bacillus subtilis (strain 168)).